The primary structure comprises 349 residues: Thioredoxin-related transmembrane protein 4 (349 aa).

The first 23 residues, 1–23 (MAGGRCGPQLTALLAAWIAAVAA), serve as a signal peptide directing secretion. In terms of domain architecture, Thioredoxin spans 30-137 (AALPPEQSRV…FEDLQNYILE (108 aa)). Catalysis depends on nucleophile residues Cys-64 and Cys-67. A disulfide bridge links Cys-64 with Cys-67. A helical transmembrane segment spans residues 190–210 (VFFVIATLVFGLFMGLVLVVI). Residues 225–240 (RSEQNRRSEEAHRAEQ) show a composition bias toward basic and acidic residues. Residues 225-349 (RSEQNRRSEE…RKSQHADKGL (125 aa)) are disordered. Acidic residues-rich tracts occupy residues 242-284 (QDAE…EEDN) and 312-321 (VEPEEAEEGI). 2 positions are modified to phosphoserine: Ser-251 and Ser-259. The segment covering 335 to 349 (DSLRQRKSQHADKGL) has biased composition (basic and acidic residues).

The protein localises to the nucleus inner membrane. It is found in the endoplasmic reticulum membrane. In Homo sapiens (Human), this protein is Thioredoxin-related transmembrane protein 4 (TMX4).